Consider the following 326-residue polypeptide: H-2 class I histocompatibility antigen, Q8 alpha chain (326 aa).

Residues methionine 1–alanine 21 form the signal peptide. The tract at residues glycine 22–glycine 111 is alpha-1. Topologically, residues glycine 22–methionine 305 are extracellular. The N-linked (GlcNAc...) asparagine glycan is linked to asparagine 107. The interval glycine 112 to threonine 203 is alpha-2. Disulfide bonds link cysteine 122-cysteine 185 and cysteine 224-cysteine 280. The tract at residues aspartate 204–tryptophan 295 is alpha-3. An Ig-like C1-type domain is found at proline 206–arginine 294. N-linked (GlcNAc...) asparagine glycosylation occurs at asparagine 277. A connecting peptide region spans residues glutamate 296–methionine 305. The helical transmembrane segment at alanine 306–leucine 326 threads the bilayer.

This sequence belongs to the MHC class I family. In terms of assembly, heterodimer of an alpha chain and a beta chain (beta-2-microglobulin).

The protein resides in the membrane. Involved in the presentation of foreign antigens to the immune system. This chain is H-2 class I histocompatibility antigen, Q8 alpha chain (H2-Q8), found in Mus musculus (Mouse).